The primary structure comprises 267 residues: 2-keto-3-deoxy-L-rhamnonate aldolase (267 aa).

H49 (proton acceptor) is an active-site residue. Q151 is a substrate binding site. Residue E153 participates in Mg(2+) binding. Positions 178 and 179 each coordinate substrate. Position 179 (D179) interacts with Mg(2+).

Belongs to the HpcH/HpaI aldolase family. KDR aldolase subfamily. In terms of assembly, homohexamer. Mg(2+) is required as a cofactor.

The catalysed reaction is 2-dehydro-3-deoxy-L-rhamnonate = (S)-lactaldehyde + pyruvate. Functionally, catalyzes the reversible retro-aldol cleavage of 2-keto-3-deoxy-L-rhamnonate (KDR) to pyruvate and lactaldehyde. The chain is 2-keto-3-deoxy-L-rhamnonate aldolase from Salmonella dublin (strain CT_02021853).